Here is a 380-residue protein sequence, read N- to C-terminus: L-lactate dehydrogenase (380 aa).

One can recognise an FMN hydroxy acid dehydrogenase domain in the interval 1-380; the sequence is MIISSTTDFR…DRSILAKTDR (380 aa). A substrate-binding site is contributed by Tyr24. FMN is bound by residues Ser106 and Gln127. Tyr129 is a substrate binding site. Residue Thr155 participates in FMN binding. Substrate is bound at residue Arg164. Lys251 contributes to the FMN binding site. His275 serves as the catalytic Proton acceptor. Arg278 is a substrate binding site. Position 306–330 (306–330) interacts with FMN; sequence DGGVRSGLDVVRMLALGAKGVLLGR.

This sequence belongs to the FMN-dependent alpha-hydroxy acid dehydrogenase family. It depends on FMN as a cofactor.

It localises to the cell inner membrane. It carries out the reaction (S)-lactate + A = pyruvate + AH2. Functionally, catalyzes the conversion of L-lactate to pyruvate. Is coupled to the respiratory chain. This chain is L-lactate dehydrogenase, found in Caulobacter sp. (strain K31).